A 273-amino-acid polypeptide reads, in one-letter code: MERREHLTLTFHSPEVPKIKGNRKYQRPTVPAKKHPSASMSCQRQQQLMDQAHIYIRTLCGSLCSFSLLMLIAMSPLNWVQFLVIKNGLELYAGLWTLCNHELCWSHTPKPPYYLQYSRAFFLISVFTILTGLGWLFSSWILNRGSMTTNLDLKVSMLSFISATCLLLCLNLFVAQVHWHTRDAMESDLLWTYYLNWCSDIFYMFAGIISLLNYLTSRSPACDENVTVIPTERSRLGVGPVTTVSPAKDEGPRSEMESLSVREKNLPKSGLWW.

4 helical membrane passes run 53 to 75 (HIYIRTLCGSLCSFSLLMLIAMS), 121 to 141 (FFLISVFTILTGLGWLFSSWI), 155 to 175 (VSMLSFISATCLLLCLNLFVA), and 189 to 209 (LLWTYYLNWCSDIFYMFAGII). The disordered stretch occupies residues 242–273 (TTVSPAKDEGPRSEMESLSVREKNLPKSGLWW). A compositionally biased stretch (basic and acidic residues) spans 247–266 (AKDEGPRSEMESLSVREKNL).

Its subcellular location is the membrane. The protein is Transmembrane protein 202 (TMEM202) of Homo sapiens (Human).